We begin with the raw amino-acid sequence, 2007 residues long: Structural maintenance of chromosomes flexible hinge domain-containing protein 1 (2007 aa).

Residue Ala-2 is modified to N-acetylalanine. The interval 111 to 702 is ATPase activity domain; the sequence is TKERIDFLPH…LSVTWPEGDE (592 aa). The residue at position 833 (Ser-833) is a Phosphoserine. Lys-1350 is modified (N6-acetyllysine). A Glycyl lysine isopeptide (Lys-Gly) (interchain with G-Cter in SUMO2) cross-link involves residue Lys-1375. Thr-1500 is subject to Phosphothreonine. The SMC hinge domain occupies 1721–1848; the sequence is GDILGKIAHL…DNLDAANHYR (128 aa). Lys-1803 carries the N6-succinyllysine modification. Ser-1975 is subject to Phosphoserine. The segment at 1984-2007 is disordered; it reads PIPTKRMRRESTRQNRRPKGDVPN.

The protein belongs to the SMC family. Highly divergent. In terms of assembly, homodimer; homodimerizes via its SMC hinge domain. Interacts with LRIF1. Post-translationally, sumoylated with SUMO1. As to expression, during embryogenesis, specifically expressed in immature olfactory sensory neurons.

The protein resides in the chromosome. The catalysed reaction is ATP + H2O = ADP + phosphate + H(+). Its function is as follows. Non-canonical member of the structural maintenance of chromosomes (SMC) protein family that plays a key role in epigenetic silencing by regulating chromatin architecture. Promotes heterochromatin formation in both autosomes and chromosome X, probably by mediating the merge of chromatin compartments. Plays a key role in chromosome X inactivation in females by promoting the spreading of heterochromatin. Recruited to inactivated chromosome X by Xist RNA and acts by mediating the merge of chromatin compartments: promotes random chromatin interactions that span the boundaries of existing structures, leading to create a compartment-less architecture typical of inactivated chromosome X. Required to facilitate Xist RNA spreading. Also required for silencing of a subset of clustered autosomal loci in somatic cells, such as the DUX4 locus. Has ATPase activity; may participate in structural manipulation of chromatin in an ATP-dependent manner as part of its role in gene expression regulation. Also plays a role in DNA repair: localizes to sites of DNA double-strand breaks in response to DNA damage to promote the repair of DNA double-strand breaks. Acts by promoting non-homologous end joining (NHEJ) and inhibiting homologous recombination (HR) repair. Required during preimplantation development, probably acts by regulating chromatin architecture. This Mus musculus (Mouse) protein is Structural maintenance of chromosomes flexible hinge domain-containing protein 1.